Reading from the N-terminus, the 289-residue chain is 3-methyl-2-oxobutanoate hydroxymethyltransferase (289 aa).

The span at 1–15 (MSTTFKLDTSTSRAN) shows a compositional bias: polar residues. Residues 1–21 (MSTTFKLDTSTSRANPTPAPM) are disordered. Residues aspartate 67 and aspartate 106 each coordinate Mg(2+). Residues 67–68 (DS), aspartate 106, and lysine 136 contribute to the 3-methyl-2-oxobutanoate site. Glutamate 138 serves as a coordination point for Mg(2+). Residue glutamate 205 is the Proton acceptor of the active site.

Belongs to the PanB family. In terms of assembly, homodecamer; pentamer of dimers. The cofactor is Mg(2+).

Its subcellular location is the cytoplasm. It carries out the reaction 3-methyl-2-oxobutanoate + (6R)-5,10-methylene-5,6,7,8-tetrahydrofolate + H2O = 2-dehydropantoate + (6S)-5,6,7,8-tetrahydrofolate. It participates in cofactor biosynthesis; (R)-pantothenate biosynthesis; (R)-pantoate from 3-methyl-2-oxobutanoate: step 1/2. In terms of biological role, catalyzes the reversible reaction in which hydroxymethyl group from 5,10-methylenetetrahydrofolate is transferred onto alpha-ketoisovalerate to form ketopantoate. The sequence is that of 3-methyl-2-oxobutanoate hydroxymethyltransferase from Erythrobacter litoralis (strain HTCC2594).